We begin with the raw amino-acid sequence, 392 residues long: MKFIDEALIRIEAGDGGNGCVSFRREKFIPKGGPDGGDGGDGGDVYLIADENLNTLIDYRFEKRFAAERGENGRSSDCTGRRGKDITLRVPVGTRAIDNDTKEVLGDLTKHGTKMLVAKGGYHGLGNARFKSSVNRAPRQKTNGTPGEKRDLQLELMLLADVGMLGLPNAGKSTFIRAVSAAKPKVADYPFTTLVPSLGVTRVDTSRSFVIADIPGLIEGASEGAGLGVRFLKHLERCHVLIHLVDIAPIDESDPADNIAIIEGELFQYSEKLANKPRWLVFNKIDTLSDEEATARAKNIMQRLGGEDDYYLISAATGKNVDVLCRDIMDFIEENPRQEQEKIDAQEVKFKWDDYHQEQLSEQVFTEDDQEGDDWDDWSEDDEEGVEIIYKP.

Residues 1–159 (MKFIDEALIR…RDLQLELMLL (159 aa)) enclose the Obg domain. Residues 160 to 333 (ADVGMLGLPN…LCRDIMDFIE (174 aa)) form the OBG-type G domain. Residues 166 to 173 (GLPNAGKS), 191 to 195 (FTTLV), 213 to 216 (DIPG), 283 to 286 (NKID), and 314 to 316 (SAA) contribute to the GTP site. Mg(2+) is bound by residues Ser173 and Thr193. The disordered stretch occupies residues 362–392 (EQVFTEDDQEGDDWDDWSEDDEEGVEIIYKP). Over residues 365 to 386 (FTEDDQEGDDWDDWSEDDEEGV) the composition is skewed to acidic residues.

This sequence belongs to the TRAFAC class OBG-HflX-like GTPase superfamily. OBG GTPase family. As to quaternary structure, monomer. Requires Mg(2+) as cofactor.

It localises to the cytoplasm. An essential GTPase which binds GTP, GDP and possibly (p)ppGpp with moderate affinity, with high nucleotide exchange rates and a fairly low GTP hydrolysis rate. Plays a role in control of the cell cycle, stress response, ribosome biogenesis and in those bacteria that undergo differentiation, in morphogenesis control. This chain is GTPase Obg, found in Histophilus somni (strain 129Pt) (Haemophilus somnus).